A 144-amino-acid chain; its full sequence is MRLNSLSPAEGAKHSAKRLGRGIGSGLGKTGGRGHKGQKSRTGGGVRRGFEGGQMPLYRRLPKFGFTSLKSLHVAEIRLNDLAKVDGNEVTLEALKAANIITKNILSVKVILAGKIERALVIKGLRVTKGAKAAIEAVGGSIEE.

A disordered region spans residues 1–52 (MRLNSLSPAEGAKHSAKRLGRGIGSGLGKTGGRGHKGQKSRTGGGVRRGFEG). Gly residues predominate over residues 21-31 (RGIGSGLGKTG).

This sequence belongs to the universal ribosomal protein uL15 family. As to quaternary structure, part of the 50S ribosomal subunit.

Its function is as follows. Binds to the 23S rRNA. The polypeptide is Large ribosomal subunit protein uL15 (Haemophilus ducreyi (strain 35000HP / ATCC 700724)).